Reading from the N-terminus, the 430-residue chain is MNNKKTLLAVAISGMMFATSAAAVDFHGYARSGIGWTSGGGEQTALQVNGGGSKYRLGNETETYVELKLGQELFKEGNKSIYLDSNIAYSVDQQVDWEATDPALREINVQFKNFAEDLLPDATLWAGKRFYQRHDVHMNDFYYWDISGPGAGVENINLGFGKLSLAVTRNTEGGATATYGTDKVYYIDDNGQIQSRFEERKANVYNDVFDIRLAELNVNPNGKLEIGFDYGNAHTKNGYYLEPGASKNGYMITLEHTQGEFFGGFNKFVAQYATDSMTSWNTGHSQGSSVNNNGHMLRLIDHGVVQFSPKVEMMYALIYEKTDLDNNQGKTWYSAGIRPMYKWNKTMSTLIELGYDRIKDQSSGEKNDLAKITLAQQWQAGDSIWARPAIRVFGTYGRWNDKFNITDRTNAGYKAKDAEFVAGVQFEAWW.

The signal sequence occupies residues 1-23 (MNNKKTLLAVAISGMMFATSAAA).

This sequence belongs to the porin LamB (TC 1.B.3) family. As to quaternary structure, homotrimer formed of three 18-stranded antiparallel beta-barrels, containing three independent channels.

The protein localises to the cell outer membrane. It carries out the reaction beta-maltose(in) = beta-maltose(out). In terms of biological role, involved in the transport of maltose and maltodextrins. This chain is Maltoporin, found in Actinobacillus succinogenes (strain ATCC 55618 / DSM 22257 / CCUG 43843 / 130Z).